Reading from the N-terminus, the 798-residue chain is Type 2 DNA topoisomerase 6 subunit B (798 aa).

ATP is bound by residues N60, D91, 112–113 (SR), and 122–129 (GQQGIGIS). Residues 221–233 (EPEDSFKSERATE) are compositionally biased toward basic and acidic residues. The tract at residues 221-245 (EPEDSFKSERATEELPPETEEIRPH) is disordered. Residue K629 coordinates ATP.

The protein belongs to the TOP6B family. In terms of assembly, homodimer. Heterotetramer of two Top6A and two Top6B chains.

It carries out the reaction ATP-dependent breakage, passage and rejoining of double-stranded DNA.. Relaxes both positive and negative superturns and exhibits a strong decatenase activity. This chain is Type 2 DNA topoisomerase 6 subunit B, found in Natronomonas pharaonis (strain ATCC 35678 / DSM 2160 / CIP 103997 / JCM 8858 / NBRC 14720 / NCIMB 2260 / Gabara) (Halobacterium pharaonis).